A 57-amino-acid chain; its full sequence is Large ribosomal subunit protein bL32 (57 aa).

Residues 1 to 19 are compositionally biased toward basic residues; the sequence is MATPKFKKSRANTHSRRSQ. Residues 1–20 are disordered; it reads MATPKFKKSRANTHSRRSQW.

Belongs to the bacterial ribosomal protein bL32 family.

In Corynebacterium aurimucosum (strain ATCC 700975 / DSM 44827 / CIP 107346 / CN-1) (Corynebacterium nigricans), this protein is Large ribosomal subunit protein bL32.